The primary structure comprises 255 residues: Hydroxyacylglutathione hydrolase (255 aa).

Zn(2+) is bound by residues histidine 53, histidine 55, aspartate 57, histidine 58, histidine 110, aspartate 127, and histidine 165.

The protein belongs to the metallo-beta-lactamase superfamily. Glyoxalase II family. Monomer. Zn(2+) serves as cofactor.

The catalysed reaction is an S-(2-hydroxyacyl)glutathione + H2O = a 2-hydroxy carboxylate + glutathione + H(+). The protein operates within secondary metabolite metabolism; methylglyoxal degradation; (R)-lactate from methylglyoxal: step 2/2. In terms of biological role, thiolesterase that catalyzes the hydrolysis of S-D-lactoyl-glutathione to form glutathione and D-lactic acid. The protein is Hydroxyacylglutathione hydrolase of Xanthomonas campestris pv. campestris (strain 8004).